The following is a 977-amino-acid chain: DNA-directed RNA polymerase 3B, chloroplastic (977 aa).

The N-terminal 71 residues, 1 to 71, are a transit peptide targeting the chloroplast; the sequence is MASTASYSPS…NNIQSQTTVC (71 aa). Catalysis depends on residues Asp678, Lys753, and Asp910.

Belongs to the phage and mitochondrial RNA polymerase family.

It localises to the plastid. The protein localises to the chloroplast. It carries out the reaction RNA(n) + a ribonucleoside 5'-triphosphate = RNA(n+1) + diphosphate. Functionally, DNA-dependent RNA polymerase catalyzes the transcription of DNA into RNA using the four ribonucleoside triphosphates as substrates. In Nicotiana tabacum (Common tobacco), this protein is DNA-directed RNA polymerase 3B, chloroplastic (RPOT3-TOM).